A 57-amino-acid chain; its full sequence is Large ribosomal subunit protein uL30 (57 aa).

This sequence belongs to the universal ribosomal protein uL30 family. In terms of assembly, part of the 50S ribosomal subunit.

The chain is Large ribosomal subunit protein uL30 from Buchnera aphidicola subsp. Cinara cedri (strain Cc).